A 308-amino-acid polypeptide reads, in one-letter code: MSTWTGKRVAVLYGGRSSEREVSLRTGAACADALRQKGHDVVLLDVDLEVAARLRAERVEVAFVALHGRFGEDGSIQGLLESMAIPYTGSGVLASAMGMDKTVSKAIFRSLGLAVADYRVFPRASAGSIGVGDLPFGLPCVVKPAGEGSSVGVHLVNEAAELGPACRDAASHAGDVIVERYVKGTEVDVAVLDGKALGAIEIVPANAFYDYAAKYTAGTTKYFYPARLPEAHVRAVMEAAEAAHRGIGCSGVTRVDFIVAGDGTPYILEVNTLPGMTATSLVPKIAAGLGLSFPDLCERILDGAALKA.

The ATP-grasp domain occupies 105-302 (KAIFRSLGLA…FPDLCERILD (198 aa)). Position 133 to 188 (133 to 188 (DLPFGLPCVVKPAGEGSSVGVHLVNEAAELGPACRDAASHAGDVIVERYVKGTEVD)) interacts with ATP. Residues aspartate 256, glutamate 269, and asparagine 271 each coordinate Mg(2+).

This sequence belongs to the D-alanine--D-alanine ligase family. Requires Mg(2+) as cofactor. Mn(2+) serves as cofactor.

The protein localises to the cytoplasm. The catalysed reaction is 2 D-alanine + ATP = D-alanyl-D-alanine + ADP + phosphate + H(+). It functions in the pathway cell wall biogenesis; peptidoglycan biosynthesis. In terms of biological role, cell wall formation. The protein is D-alanine--D-alanine ligase of Anaeromyxobacter sp. (strain K).